A 190-amino-acid chain; its full sequence is Threonylcarbamoyl-AMP synthase (190 aa).

A YrdC-like domain is found at 7–190 (SEAVAHAVAV…ALTGELFRQG (184 aa)).

It belongs to the SUA5 family. TsaC subfamily.

It is found in the cytoplasm. The enzyme catalyses L-threonine + hydrogencarbonate + ATP = L-threonylcarbamoyladenylate + diphosphate + H2O. In terms of biological role, required for the formation of a threonylcarbamoyl group on adenosine at position 37 (t(6)A37) in tRNAs that read codons beginning with adenine. Catalyzes the conversion of L-threonine, HCO(3)(-)/CO(2) and ATP to give threonylcarbamoyl-AMP (TC-AMP) as the acyladenylate intermediate, with the release of diphosphate. This chain is Threonylcarbamoyl-AMP synthase, found in Klebsiella pneumoniae subsp. pneumoniae (strain ATCC 700721 / MGH 78578).